We begin with the raw amino-acid sequence, 91 residues long: Defensin-like protein 95 (91 aa).

The N-terminal stretch at 1–27 is a signal peptide; it reads MGSLKLSTFAIVVCLSILLISPIEVNG. 4 disulfides stabilise this stretch: Cys31–Cys76, Cys38–Cys63, Cys47–Cys73, and Cys51–Cys75.

This sequence belongs to the DEFL family.

The protein localises to the secreted. This chain is Defensin-like protein 95, found in Arabidopsis thaliana (Mouse-ear cress).